The sequence spans 242 residues: UPF0246 protein SPP_1571 (242 aa).

Belongs to the UPF0246 family.

The polypeptide is UPF0246 protein SPP_1571 (Streptococcus pneumoniae (strain P1031)).